A 259-amino-acid chain; its full sequence is Ribosomal RNA large subunit methyltransferase E (259 aa).

Positions 49, 51, 69, 88, and 112 each coordinate S-adenosyl-L-methionine. The active-site Proton acceptor is Lys152. The 59-residue stretch at 199–257 (PIAEGDEHTVEIVDTGDEGDGIARIEGYTLFVDDAAEGDTVDVTVTDLKPNYGFAERRD) folds into the TRAM domain.

The protein belongs to the class I-like SAM-binding methyltransferase superfamily. RNA methyltransferase RlmE family.

The protein localises to the cytoplasm. The catalysed reaction is uridine(2552) in 23S rRNA + S-adenosyl-L-methionine = 2'-O-methyluridine(2552) in 23S rRNA + S-adenosyl-L-homocysteine + H(+). Specifically methylates the uridine in position 2552 of 23S rRNA at the 2'-O position of the ribose in the fully assembled 50S ribosomal subunit. This Halobacterium salinarum (strain ATCC 29341 / DSM 671 / R1) protein is Ribosomal RNA large subunit methyltransferase E.